Consider the following 171-residue polypeptide: T-cell surface glycoprotein CD3 delta chain (171 aa).

An N-terminal signal peptide occupies residues 1-21 (MEHSTFLSGLVLATLLSQVSP). Over 22 to 105 (FKIPIEELED…CVELDPATVA (84 aa)) the chain is Extracellular. An intrachain disulfide couples C37 to C73. Residues N38 and N74 are each glycosylated (N-linked (GlcNAc...) asparagine). Residues 106–126 (GIIVTDVIATLLLALGVFCFA) traverse the membrane as a helical segment. At 127–171 (GHETGRLSGAADTQALLRNDQVYQPLRDRDDAQYSHLGGNWARNK) the chain is on the cytoplasmic side. The region spanning 138 to 166 (DTQALLRNDQVYQPLRDRDDAQYSHLGGN) is the ITAM domain. Residues Y149 and Y160 each carry the phosphotyrosine modification.

The TCR-CD3 complex is composed of a CD3D/CD3E and a CD3G/CD3E heterodimers that preferentially associate with TCRalpha and TCRbeta, respectively, to form TCRalpha/CD3E/CD3G and TCRbeta/CD3G/CD3E trimers. In turn, the hexamer interacts with CD3Z homodimer to form the TCR-CD3 complex. Alternatively, TCRalpha and TCRbeta can be replaced by TCRgamma and TCRdelta. Interacts with coreceptors CD4 and CD8. Post-translationally, phosphorylated on Tyr residues after T-cell receptor triggering by LCK in association with CD4/CD8. In terms of tissue distribution, CD3D is mostly present on T-lymphocytes with its TCR-CD3 partners. Present also in fetal NK-cells.

It localises to the cell membrane. Part of the TCR-CD3 complex present on T-lymphocyte cell surface that plays an essential role in adaptive immune response. When antigen presenting cells (APCs) activate T-cell receptor (TCR), TCR-mediated signals are transmitted across the cell membrane by the CD3 chains CD3D, CD3E, CD3G and CD3Z. All CD3 chains contain immunoreceptor tyrosine-based activation motifs (ITAMs) in their cytoplasmic domain. Upon TCR engagement, these motifs become phosphorylated by Src family protein tyrosine kinases LCK and FYN, resulting in the activation of downstream signaling pathways. In addition of this role of signal transduction in T-cell activation, CD3D plays an essential role in thymocyte differentiation. Indeed, participates in correct intracellular TCR-CD3 complex assembly and surface expression. In absence of a functional TCR-CD3 complex, thymocytes are unable to differentiate properly. Interacts with CD4 and CD8 and thus serves to establish a functional link between the TCR and coreceptors CD4 and CD8, which is needed for activation and positive selection of CD4 or CD8 T-cells. The protein is T-cell surface glycoprotein CD3 delta chain (CD3D) of Homo sapiens (Human).